The chain runs to 238 residues: uncharacterized protein (238 aa).

The protein to M.thermoautotrophicum MTH564.

This is an uncharacterized protein from Methanocaldococcus jannaschii (strain ATCC 43067 / DSM 2661 / JAL-1 / JCM 10045 / NBRC 100440) (Methanococcus jannaschii).